The following is a 59-amino-acid chain: Mu-conotoxin SrVA (59 aa).

The signal sequence occupies residues methionine 1 to alanine 22. A propeptide spanning residues glutamine 23–histidine 44 is cleaved from the precursor. Disulfide bonds link cysteine 51–cysteine 58 and cysteine 52–cysteine 59.

This sequence belongs to the conotoxin T superfamily. As to expression, expressed by the venom duct.

The protein resides in the secreted. Functionally, mu-conotoxins block voltage-gated sodium channels. This peptide inhibits the cardiac sodium channel hNav1.5/SCN5A (33% inhibition at 200 nM, 50% at 400 nM, and 55% at 600 nM). Does not interfere with the voltage-dependence of activation, but affects the voltage-dependence of inactivation of hNav1.5. In vivo, intracranial injection into 9-day-old mice causes transient symptoms, including extension of the body and clockwise and counter-clockwise turns, that last 3 to 4 minutes. Intracranial injection into 16-day-old mice, causes transient symptoms, including agitated breathing and occasional turning followed by scratching and grooming behavior, that last for 15-19 minutes. The protein is Mu-conotoxin SrVA of Conus spurius (Alphabet cone).